Here is a 198-residue protein sequence, read N- to C-terminus: Nucleoside triphosphate pyrophosphatase (198 aa).

D72 (proton acceptor) is an active-site residue.

Belongs to the Maf family. It depends on a divalent metal cation as a cofactor.

It is found in the cytoplasm. It carries out the reaction a ribonucleoside 5'-triphosphate + H2O = a ribonucleoside 5'-phosphate + diphosphate + H(+). The enzyme catalyses a 2'-deoxyribonucleoside 5'-triphosphate + H2O = a 2'-deoxyribonucleoside 5'-phosphate + diphosphate + H(+). Functionally, nucleoside triphosphate pyrophosphatase. May have a dual role in cell division arrest and in preventing the incorporation of modified nucleotides into cellular nucleic acids. The polypeptide is Nucleoside triphosphate pyrophosphatase (Acinetobacter baylyi (strain ATCC 33305 / BD413 / ADP1)).